We begin with the raw amino-acid sequence, 1086 residues long: Isoleucine--tRNA ligase (1086 aa).

Positions proline 53 to histidine 63 match the 'HIGH' region motif. A 'KMSKS' region motif is present at residues lysine 624–arginine 628. ATP is bound at residue lysine 627.

This sequence belongs to the class-I aminoacyl-tRNA synthetase family. IleS type 2 subfamily. Monomer. The cofactor is Zn(2+).

Its subcellular location is the cytoplasm. It catalyses the reaction tRNA(Ile) + L-isoleucine + ATP = L-isoleucyl-tRNA(Ile) + AMP + diphosphate. Catalyzes the attachment of isoleucine to tRNA(Ile). As IleRS can inadvertently accommodate and process structurally similar amino acids such as valine, to avoid such errors it has two additional distinct tRNA(Ile)-dependent editing activities. One activity is designated as 'pretransfer' editing and involves the hydrolysis of activated Val-AMP. The other activity is designated 'posttransfer' editing and involves deacylation of mischarged Val-tRNA(Ile). This is Isoleucine--tRNA ligase from Rickettsia prowazekii (strain Madrid E).